A 290-amino-acid polypeptide reads, in one-letter code: MFKGSIVAIVTPFNNGQVDFEKLRELVEFQISNGTDAIVPCGTTGEASTLDYDEHMDVVKTVIEQVNKRVPVIAGTGSNSTAEAIELSQKAKEVGADGVLLVTPYYNKPTQEGLVRHYTAIADAVAIPQILYNVPGRTGVNMLPETVARLAPHKNIVAIKEATGSLQQASEILALCGDKIDVLCGDDFITFPMMACGAKGVISVLANIMPKTVAELTDAFYAGDMEKARQLHLQTLKIGNAMFIESNPIPVKTALGLMGKCSDEVRLPLCPMGAANKEKLAAIMKEYELI.

A pyruvate-binding site is contributed by T44. Catalysis depends on Y132, which acts as the Proton donor/acceptor. K160 functions as the Schiff-base intermediate with substrate in the catalytic mechanism. Pyruvate is bound at residue I202.

The protein belongs to the DapA family. As to quaternary structure, homotetramer; dimer of dimers.

The protein resides in the cytoplasm. It carries out the reaction L-aspartate 4-semialdehyde + pyruvate = (2S,4S)-4-hydroxy-2,3,4,5-tetrahydrodipicolinate + H2O + H(+). It participates in amino-acid biosynthesis; L-lysine biosynthesis via DAP pathway; (S)-tetrahydrodipicolinate from L-aspartate: step 3/4. Catalyzes the condensation of (S)-aspartate-beta-semialdehyde [(S)-ASA] and pyruvate to 4-hydroxy-tetrahydrodipicolinate (HTPA). In Geobacter metallireducens (strain ATCC 53774 / DSM 7210 / GS-15), this protein is 4-hydroxy-tetrahydrodipicolinate synthase.